The primary structure comprises 119 residues: MARFVVAALLVLLSLSGLEAIQHAPKIQVYSRHPAENGKPNFLNCYVSGFHPSDIEVDLLKNGKKIEKVEHSDLSFSKDWSFYLLYYTEFTPNDKDEYACRVSHMTFPAPKTVKWDRNM.

An N-terminal signal peptide occupies residues 1–20 (MARFVVAALLVLLSLSGLEA). The Ig-like C1-type domain occupies 25 to 114 (PKIQVYSRHP…MTFPAPKTVK (90 aa)). A disulfide bridge links cysteine 45 with cysteine 100.

The protein belongs to the beta-2-microglobulin family. Heterodimer of an alpha chain and a beta chain. Beta-2-microglobulin is the beta-chain of major histocompatibility complex class I molecules.

It is found in the secreted. In terms of biological role, component of the class I major histocompatibility complex (MHC). Involved in the presentation of peptide antigens to the immune system. The protein is Beta-2-microglobulin (B2M) of Pithecia irrorata (Gray monk saki).